The chain runs to 371 residues: NADH-ubiquinone oxidoreductase chain 1 (371 aa).

The next 10 membrane-spanning stretches (helical) occupy residues 7-27 (IISI…VAYV), 44-64 (PNAV…KLLL), 77-97 (LFFL…AVIP), 109-129 (LGIL…LLAG), 153-173 (LVLS…NLGV), 180-200 (AVLF…GSIA), 226-246 (AVVF…MCIL), 263-283 (VFNI…NWMV), 302-322 (GWLY…IFIL), and 338-358 (FCWT…PCIL).

It belongs to the complex I subunit 1 family.

Its subcellular location is the mitochondrion inner membrane. The catalysed reaction is a ubiquinone + NADH + 5 H(+)(in) = a ubiquinol + NAD(+) + 4 H(+)(out). In terms of biological role, core subunit of the mitochondrial membrane respiratory chain NADH dehydrogenase (Complex I) that is believed to belong to the minimal assembly required for catalysis. Complex I functions in the transfer of electrons from NADH to the respiratory chain. The immediate electron acceptor for the enzyme is believed to be ubiquinone. This Neurospora crassa (strain ATCC 24698 / 74-OR23-1A / CBS 708.71 / DSM 1257 / FGSC 987) protein is NADH-ubiquinone oxidoreductase chain 1 (ndh-1).